Reading from the N-terminus, the 631-residue chain is Probable ATP-dependent RNA helicase DDX53 (631 aa).

The 62-residue stretch at 48–109 folds into the KH domain; sequence EPPLCFKIKN…EMKAKAKAAI (62 aa). Positions 222 to 250 match the Q motif motif; the sequence is RFKDAFQQYPDLLKSIIRVGIVKPTPIQS. ATP is bound by residues lysine 244, glutamine 249, 268 to 273, and histidine 311; that span reads TGTGKT. The Helicase ATP-binding domain occupies 253–428; sequence WPIILQGIDL…LSYLKDPMIV (176 aa). Residues 376–379 carry the DEAD box motif; the sequence is DEAD. Residues 440–601 form the Helicase C-terminal domain; sequence TVKQNIIVTT…SVPEDLVVMA (162 aa).

The protein belongs to the DEAD box helicase family. In terms of tissue distribution, expressed in testis. Wide expression in various cancer tissues and cancer cell lines.

Its subcellular location is the nucleus. The enzyme catalyses ATP + H2O = ADP + phosphate + H(+). In Homo sapiens (Human), this protein is Probable ATP-dependent RNA helicase DDX53 (DDX53).